The primary structure comprises 216 residues: Redox-sensing transcriptional repressor Rex (216 aa).

A DNA-binding region (H-T-H motif) is located at residues 17-56; sequence IYFRYLTFLHDAGTDRISSAELSDAIKFDAATIRRDFSYF. 91–96 serves as a coordination point for NAD(+); the sequence is GAGNLG.

This sequence belongs to the transcriptional regulatory Rex family. In terms of assembly, homodimer.

The protein resides in the cytoplasm. In terms of biological role, modulates transcription in response to changes in cellular NADH/NAD(+) redox state. The sequence is that of Redox-sensing transcriptional repressor Rex from Leuconostoc citreum (strain KM20).